A 316-amino-acid polypeptide reads, in one-letter code: 4-hydroxy-3-methylbut-2-enyl diphosphate reductase (316 aa).

Position 12 (cysteine 12) interacts with [4Fe-4S] cluster. Positions 41 and 74 each coordinate (2E)-4-hydroxy-3-methylbut-2-enyl diphosphate. Histidine 41 and histidine 74 together coordinate dimethylallyl diphosphate. 2 residues coordinate isopentenyl diphosphate: histidine 41 and histidine 74. Cysteine 96 serves as a coordination point for [4Fe-4S] cluster. Residue histidine 124 participates in (2E)-4-hydroxy-3-methylbut-2-enyl diphosphate binding. Histidine 124 contributes to the dimethylallyl diphosphate binding site. Histidine 124 provides a ligand contact to isopentenyl diphosphate. Catalysis depends on glutamate 126, which acts as the Proton donor. Residue threonine 168 coordinates (2E)-4-hydroxy-3-methylbut-2-enyl diphosphate. Cysteine 198 contributes to the [4Fe-4S] cluster binding site. (2E)-4-hydroxy-3-methylbut-2-enyl diphosphate contacts are provided by serine 226, serine 227, asparagine 228, and serine 270. Dimethylallyl diphosphate contacts are provided by serine 226, serine 227, asparagine 228, and serine 270. Isopentenyl diphosphate contacts are provided by serine 226, serine 227, asparagine 228, and serine 270.

It belongs to the IspH family. Requires [4Fe-4S] cluster as cofactor.

It catalyses the reaction isopentenyl diphosphate + 2 oxidized [2Fe-2S]-[ferredoxin] + H2O = (2E)-4-hydroxy-3-methylbut-2-enyl diphosphate + 2 reduced [2Fe-2S]-[ferredoxin] + 2 H(+). It carries out the reaction dimethylallyl diphosphate + 2 oxidized [2Fe-2S]-[ferredoxin] + H2O = (2E)-4-hydroxy-3-methylbut-2-enyl diphosphate + 2 reduced [2Fe-2S]-[ferredoxin] + 2 H(+). It participates in isoprenoid biosynthesis; dimethylallyl diphosphate biosynthesis; dimethylallyl diphosphate from (2E)-4-hydroxy-3-methylbutenyl diphosphate: step 1/1. The protein operates within isoprenoid biosynthesis; isopentenyl diphosphate biosynthesis via DXP pathway; isopentenyl diphosphate from 1-deoxy-D-xylulose 5-phosphate: step 6/6. Its function is as follows. Catalyzes the conversion of 1-hydroxy-2-methyl-2-(E)-butenyl 4-diphosphate (HMBPP) into a mixture of isopentenyl diphosphate (IPP) and dimethylallyl diphosphate (DMAPP). Acts in the terminal step of the DOXP/MEP pathway for isoprenoid precursor biosynthesis. In Marinobacter nauticus (strain ATCC 700491 / DSM 11845 / VT8) (Marinobacter aquaeolei), this protein is 4-hydroxy-3-methylbut-2-enyl diphosphate reductase.